Here is a 1087-residue protein sequence, read N- to C-terminus: MMPAMRASLILGCLLIIGPWAILAENPLPTIFPDKDELVQALHSSFTLKCTGESEVSWQNPNSNPEKQNVVIRSEENNSGLFVSILEVSDASAFDTGLYTCYHNHTQTEESEIEGTDIYIYVPDPNVPFAPPGLFDHIIVVEEDESALVPCRTTDPSSEVTLKNIESSRTVFAFYDSKQGFAGNFPPGSYICETTSNKMVYQTEPYILQTWKATHNISVEMEAPKTMFRAGETIAIDCIVLDNEVVDLKWTYPGKQRGVGIRNVEESKVPYQRLVYTLTLANATTEDSGEYECAVIHATLDNRVVKKTNITVHEKGFIDLEPMFGSEEFANLHEVKSFIVNLHAYPTPGLFWLKDNRTLSENLTEITTSIVTTKETRFQSKLKLIRAKEEDSGLYTLVAQNDRETKSYSFILQIKVPALILELVDKHHGASGEQTVGCLAKGMPVPDVEWLVCKDIKRCNNDTLWSILATNGSEISMETHQDDEQIESQVTFKKIEETMAIRCIAKNELGVVARELKLVAPTLRSELTVAAAVLVLLVIVIISLIVLVIIWKQKPRYEIRWRVIESISPDGHEYIYVDPMQLPYDSRWEFPRDGLVLGRILGSGAFGKVVEGAAYGLSRSQPVMKVAVKMLKPTARSSEKQALMSELKIMTHLGAHLNIVNLLGACTKSGPIYIITEYCFYGDLVNYLHKNRDNFQSRHPEKPKKDLDIFGLNPADESTRSYVILSFENNGDYMDMKQADTMQYVPMLEMKEPSKYSDIQRSLYDRPASYKKKPLSEVKNILSDDGFEGLTVLDLLSFTYQVARGMEFLASKNCVHRDLAARNVLLAHGKIVKICDFGLARDIMHDSNYVSKGSTFLPVKWMAPESIFDNLYTTLSDVWSFGILLWEIFSLGGTPYPGMIVDSTFYNKIKSGYRMAKPDHATHEVYDIMVKCWNSEPEKRPSFRHLSDIVESLLPMEYKRCYETVLHDFLKSDHPAVTRMRSDSDNSYIGVTYKNEHKMKDRESGFDEQRLSADSGYIIPLPDIDPVSEDESGKRNRHSSQTSEESAIETGSSSSTFIKRDDETIEDIDMMDDIGIDSSDLVEDSFL.

A signal peptide spans 1 to 24 (MMPAMRASLILGCLLIIGPWAILA). The Extracellular segment spans residues 25–530 (ENPLPTIFPD…PTLRSELTVA (506 aa)). Ig-like C2-type domains follow at residues 27 to 114 (PLPT…SEIE) and 118 to 211 (IYIY…LQTW). A disulfide bridge connects residues Cys-50 and Cys-101. N-linked (GlcNAc...) asparagine glycosylation is found at Asn-77 and Asn-104. A disulfide bridge links Cys-151 with Cys-192. 7 N-linked (GlcNAc...) asparagine glycosylation sites follow: Asn-216, Asn-282, Asn-309, Asn-356, Asn-362, Asn-461, and Asn-471. 3 consecutive Ig-like C2-type domains span residues 217-309 (ISVE…KKTN), 315-409 (KGFI…KSYS), and 417-519 (PALI…LKLV). Cys-238 and Cys-293 form a disulfide bridge. Cysteines 438 and 503 form a disulfide. A helical membrane pass occupies residues 531-551 (AAVLVLLVIVIISLIVLVIIW). Topologically, residues 552–1087 (KQKPRYEIRW…SSDLVEDSFL (536 aa)) are cytoplasmic. Phosphotyrosine; by autocatalysis is present on residues Tyr-574 and Tyr-576. The region spanning 595–970 (LVLGRILGSG…CYETVLHDFL (376 aa)) is the Protein kinase domain. ATP contacts are provided by residues 601-609 (LGSGAFGKV) and Lys-629. Tyr-722, Tyr-733, Tyr-744, Tyr-756, and Tyr-764 each carry phosphotyrosine; by autocatalysis. The Proton acceptor role is filled by Asp-818. Phosphotyrosine; by autocatalysis is present on residues Tyr-849, Tyr-988, and Tyr-1017. The disordered stretch occupies residues 1017–1064 (YIIPLPDIDPVSEDESGKRNRHSSQTSEESAIETGSSSSTFIKRDDET). Over residues 1039 to 1057 (SSQTSEESAIETGSSSSTF) the composition is skewed to polar residues.

It belongs to the protein kinase superfamily. Tyr protein kinase family. CSF-1/PDGF receptor subfamily. As to quaternary structure, interacts with homodimeric pdgfa, pdgfb and pdgfc, and with heterodimers formed by pdgfa and pdgfb. Monomer in the absence of bound ligand. Interaction with dimeric pdgfa, pdgfb and/or pdgfc leads to receptor dimerization, where both pdgfra homodimers and heterodimers with pdgfrb are observed. Post-translationally, ubiquitinated, leading to its internalization and degradation. Autophosphorylated on tyrosine residues upon ligand binding. Autophosphorylation occurs in trans, i.e. one subunit of the dimeric receptor phosphorylates tyrosine residues on the other subunit.

It localises to the cell membrane. It is found in the cell projection. Its subcellular location is the cilium. The protein localises to the golgi apparatus. The catalysed reaction is L-tyrosyl-[protein] + ATP = O-phospho-L-tyrosyl-[protein] + ADP + H(+). Present in an inactive conformation in the absence of bound ligand. Binding of pdgfa and/or pdgfb leads to dimerization and activation by autophosphorylation on tyrosine residues. In terms of biological role, tyrosine-protein kinase that acts as a cell-surface receptor for pdgfa, pdgfb and pdgfc and plays an essential role in the regulation of embryonic development, cell proliferation, survival and chemotaxis. Depending on the context, promotes or inhibits cell proliferation and cell migration. Plays an important role in the differentiation of bone marrow-derived mesenchymal stem cells. Required for normal skeleton development. Required for normal development of the gastrointestinal tract. Plays a role in cell migration and chemotaxis in wound healing. Plays a role in platelet activation, secretion of agonists from platelet granules, and in thrombin-induced platelet aggregation. Binding of its cognate ligands - homodimeric pdgfa, homodimeric pdgfb, heterodimers formed by pdgfa and pdgfb or homodimeric pdgfc -leads to the activation of several signaling cascades; the response depends on the nature of the bound ligand and is modulated by the formation of heterodimers between pdgfra and pdgfrb. Phosphorylates pik3r1, plcg1, and ptpn11. Activation of plcg1 leads to the production of the cellular signaling molecules diacylglycerol and inositol 1,4,5-trisphosphate, mobilization of cytosolic Ca(2+) and the activation of protein kinase C. Phosphorylates pik3r1, the regulatory subunit of phosphatidylinositol 3-kinase, and thereby mediates activation of the akt1 signaling pathway. Mediates activation of hras and of the MAP kinases mapk1/erk2 and/or mapk3/erk1. Promotes activation of stat family members stat1, stat3 and stat5a and/or stat5b. Receptor signaling is down-regulated by protein phosphatases that dephosphorylate the receptor and its down-stream effectors, and by rapid internalization of the activated receptor. In Xenopus laevis (African clawed frog), this protein is Platelet-derived growth factor receptor alpha (pdgfra).